A 312-amino-acid polypeptide reads, in one-letter code: Small ribosomal subunit biogenesis GTPase RsgA (312 aa).

In terms of domain architecture, CP-type G spans Q86–P245. GTP-binding positions include T135 to D138 and G187 to S195. Zn(2+) is bound by residues C270, C275, H277, and C283.

It belongs to the TRAFAC class YlqF/YawG GTPase family. RsgA subfamily. As to quaternary structure, monomer. Associates with 30S ribosomal subunit, binds 16S rRNA. The cofactor is Zn(2+).

Its subcellular location is the cytoplasm. One of several proteins that assist in the late maturation steps of the functional core of the 30S ribosomal subunit. Helps release RbfA from mature subunits. May play a role in the assembly of ribosomal proteins into the subunit. Circularly permuted GTPase that catalyzes slow GTP hydrolysis, GTPase activity is stimulated by the 30S ribosomal subunit. The sequence is that of Small ribosomal subunit biogenesis GTPase RsgA from Prochlorococcus marinus (strain NATL2A).